Reading from the N-terminus, the 56-residue chain is Protein p56 (56 aa).

Belongs to the phi29likevirus protein p56 family. In terms of assembly, homodimer. Interacts with host UDG; this interaction inhibits the uracil-DNA glycosylase.

In terms of biological role, inhibits the host uracil-DNA glycosylase (UDG), an enzyme which removes uracil residues from DNA by the base excision repair. Interacts with host uracil-DNA glycosylase and prevents the latter from binding to DNA. Since the viral DNA polymerase efficiently incorporates dUMP into DNA, the virus needs to prevent the deleterious effect caused by host UDG when it eliminates uracil residues present in the viral genome. This chain is Protein p56 (1B), found in Bacillus phage PZA (Bacteriophage PZA).